The primary structure comprises 109 residues: uncharacterized protein (109 aa).

This is an uncharacterized protein from Bacillus subtilis (strain 168).